We begin with the raw amino-acid sequence, 374 residues long: Polar flagellin E (374 aa).

Residues S102–A126 adopt a coiled-coil conformation.

It belongs to the bacterial flagellin family. Heteromer of multiple flagellin subunits including FlaA, FlaB/D, FlaC, FlaE and FlaF.

It localises to the secreted. It is found in the bacterial flagellum. Flagellin is the subunit protein which polymerizes to form the filaments of bacterial flagella. This is Polar flagellin E (flaE) from Vibrio parahaemolyticus serotype O3:K6 (strain RIMD 2210633).